We begin with the raw amino-acid sequence, 396 residues long: Probable circularly permuted 1,3-beta-glucanase YJL171C (396 aa).

Positions 1–19 are cleaved as a signal peptide; that stretch reads MLQSIVLSVCMFMLHTVAA. Asn51, Asn99, Asn122, Asn146, Asn174, Asn219, and Asn249 each carry an N-linked (GlcNAc...) asparagine glycan. An ExDxxE motif motif is present at residues 259–264; it reads EYDIFE. Residues Asn267, Asn300, Asn328, and Asn346 are each glycosylated (N-linked (GlcNAc...) asparagine). Residue Asn368 is the site of GPI-anchor amidated asparagine attachment. Positions 369–396 are cleaved as a propeptide — removed in mature form; sequence GVALTKMQNGVWYYILAIFTAFTQVVLI.

The protein belongs to the PGA52 family. Post-translationally, extensively N-glycosylated.

The protein localises to the cell membrane. It catalyses the reaction Hydrolysis of (1-&gt;3)-beta-D-glucosidic linkages in (1-&gt;3)-beta-D-glucans.. Functionally, probable circularly permuted 1,3-beta-glucanase involved in cell wall modification through beta-1,3-glucan network alterations such as increased branching or remodeling. The polypeptide is Probable circularly permuted 1,3-beta-glucanase YJL171C (TOH1) (Saccharomyces cerevisiae (strain ATCC 204508 / S288c) (Baker's yeast)).